The primary structure comprises 299 residues: ATP phosphoribosyltransferase (299 aa).

Belongs to the ATP phosphoribosyltransferase family. Long subfamily. In terms of assembly, equilibrium between an active dimeric form, an inactive hexameric form and higher aggregates. Interconversion between the various forms is largely reversible and is influenced by the natural substrates and inhibitors of the enzyme. Requires Mg(2+) as cofactor.

It localises to the cytoplasm. The enzyme catalyses 1-(5-phospho-beta-D-ribosyl)-ATP + diphosphate = 5-phospho-alpha-D-ribose 1-diphosphate + ATP. It functions in the pathway amino-acid biosynthesis; L-histidine biosynthesis; L-histidine from 5-phospho-alpha-D-ribose 1-diphosphate: step 1/9. Its activity is regulated as follows. Feedback inhibited by histidine. Catalyzes the condensation of ATP and 5-phosphoribose 1-diphosphate to form N'-(5'-phosphoribosyl)-ATP (PR-ATP). Has a crucial role in the pathway because the rate of histidine biosynthesis seems to be controlled primarily by regulation of HisG enzymatic activity. The sequence is that of ATP phosphoribosyltransferase from Escherichia coli O157:H7.